A 987-amino-acid polypeptide reads, in one-letter code: Vacuolar membrane protease (987 aa).

Topologically, residues 1 to 14 (MATRKARNPLAFMP) are cytoplasmic. A helical membrane pass occupies residues 15–35 (WPVTILTTAMYLALIIPLLVI). The Vacuolar segment spans residues 36 to 384 (HHNVPPAPRT…AFAVFRLHTL (349 aa)). N-linked (GlcNAc...) asparagine glycosylation is found at Asn-51 and Asn-117. Zn(2+) contacts are provided by His-167 and Asp-179. Glu-213 acts as the Proton acceptor in catalysis. Residues Glu-214, Glu-239, and His-312 each contribute to the Zn(2+) site. A helical transmembrane segment spans residues 385–405 (FALSVTLLIVAPLTLLVTSVI). The Cytoplasmic portion of the chain corresponds to 406–435 (LSRADKMYLFRSSVYSEINDDYIPLRGLRG). A helical membrane pass occupies residues 436–456 (FFRFPFLISIPTGVTVGLAYM). Topologically, residues 457–466 (VTKVNPFIAH) are vacuolar. A helical transmembrane segment spans residues 467 to 487 (SSSYAVWSMMISAWIFLAWFV). The Cytoplasmic segment spans residues 488-501 (SRVANSARPSAFHR). A helical transmembrane segment spans residues 502-522 (VYTWTWMFVLTWSLMVVCTVY). Residues 523–526 (EHEE) are Vacuolar-facing. Residues 527–547 (GLAGGYFIFFYFAGTFLATWI) traverse the membrane as a helical segment. Residues 548–649 (SYLELFALPT…WSGVLPRWTW (102 aa)) are Cytoplasmic-facing. The interval 572-600 (STQGSRLAASGDEHQDDAAEEDPTESTSL) is disordered. The helical transmembrane segment at 650–670 (LLQLLITAPVILMLIVPLALL) threads the bilayer. The Vacuolar segment spans residues 671-686 (TTSALSQTGQDGSPQL). A helical membrane pass occupies residues 687-707 (LIYLFISCLTALLFAPMLPFI). At 708–715 (HRYTYHLP) the chain is on the cytoplasmic side. Residues 716–736 (IFLLFVFIGTMIYNLVAFPFA) traverse the membrane as a helical segment. Over 737 to 987 (DSNRLKLFFL…KRSSLGALGS (251 aa)) the chain is Vacuolar. 2 N-linked (GlcNAc...) asparagine glycosylation sites follow: Asn-781 and Asn-871.

Belongs to the peptidase M28 family. Zn(2+) serves as cofactor.

The protein resides in the vacuole membrane. Functionally, may be involved in vacuolar sorting and osmoregulation. In Penicillium rubens (strain ATCC 28089 / DSM 1075 / NRRL 1951 / Wisconsin 54-1255) (Penicillium chrysogenum), this protein is Vacuolar membrane protease.